Consider the following 561-residue polypeptide: Tudor and KH domain-containing protein (561 aa).

2 consecutive KH domains span residues 52 to 115 and 124 to 190; these read DIEI…KAAI and PVSE…KHLI. Residues Lys65, Lys76, Lys110, Lys112, Lys152, Lys175, Lys181, Lys187, Lys193, Lys256, and Lys267 each participate in a glycyl lysine isopeptide (Lys-Gly) (interchain with G-Cter in ubiquitin) cross-link. Residues 219-262 are disordered; it reads SVRREDMTEPGGAGEPALWKNTSSSMEPTAPLVTPPPKGGGDMA. Ser278 carries the phosphoserine modification. A Tudor domain is found at 353–412; the sequence is TVHVGDIVAAPLPTNGSWYRARVLGTLENGNLDLYFVDFGDNGDCPLKDLRALRSDFLSL. Residues Lys479, Lys510, and Lys529 each participate in a glycyl lysine isopeptide (Lys-Gly) (interchain with G-Cter in ubiquitin) cross-link.

The protein belongs to the Tdrkh family. In terms of assembly, interacts with (symmetrically methylated) PIWIL1, PIWIL2 and PIWIL4. Post-translationally, ubiquitinated by PRKN during mitophagy, leading to its degradation and enhancement of mitophagy. Deubiquitinated by USP30.

It localises to the cytoplasm. Its subcellular location is the mitochondrion. Functionally, participates in the primary piRNA biogenesis pathway and is required during spermatogenesis to repress transposable elements and prevent their mobilization, which is essential for the germline integrity. The piRNA metabolic process mediates the repression of transposable elements during meiosis by forming complexes composed of piRNAs and Piwi proteins and govern the methylation and subsequent repression of transposons. Required for the final steps of primary piRNA biogenesis by participating in the processing of 31-37 nt intermediates into mature piRNAs. May act in pi-bodies and piP-bodies by transferring piRNA precursors or intermediates to or between these granules. The polypeptide is Tudor and KH domain-containing protein (TDRKH) (Homo sapiens (Human)).